The primary structure comprises 63 residues: MSGIQLDKETILKYSSAALVALSAVVAVMMVSNNSESWKPILVGAVVAASGAAAYQSWWPKQS.

The protein is Transmembrane protein 033R of Dryophytes versicolor (chameleon treefrog).